We begin with the raw amino-acid sequence, 420 residues long: Maturation protein A2 (420 aa).

3 RNA-binding regions span residues Ile158–Lys176, Gln226–Leu236, and Pro294–Trp298.

It belongs to the Leviviricetes maturation protein family. As to quaternary structure, interacts with host MurA; this interaction inhibits the first step in host cell wall synthesis. Interacts with the capsid protein.

Its subcellular location is the virion. Induces host cell lysis. Inhibits host MurA activity thereby blocking the synthesis of murein precursors necessary for the host cell wall biosynthesis. May be responsible for the attachment to the host pilus. Makes extensive contacts with the viral genome. This is Maturation protein A2 from Escherichia virus Qbeta (Bacteriophage Q-beta).